The chain runs to 380 residues: Peptide chain release factor 1-like, mitochondrial (380 aa).

The N-terminal 26 residues, 1–26 (MRSRVLWGAARWLWPRRAVGPARRPL), are a transit peptide targeting the mitochondrion. A coiled-coil region spans residues 63-117 (ELLAVIKLLNEKERELRETEHLLHDENEDLRKLAENEITLCQKEITQLKHQIILL). Residues 236–300 (PKDLRIDTKR…LRAKLYSMHL (65 aa)) form a GGQ domain region. Residues 250–252 (GGQ) carry the GGQ motif. An N5-methylglutamine modification is found at Gln-252.

This sequence belongs to the prokaryotic/mitochondrial release factor family. Methylation of glutamine in the GGQ triplet by HEMK1 is conserved from bacteria to mammals. Expressed in skeletal muscle (at protein level).

The protein resides in the mitochondrion. Functionally, mitochondrial peptide chain release factor that directs the termination of translation in response to the peptide chain termination codons UAA and UAG. This Homo sapiens (Human) protein is Peptide chain release factor 1-like, mitochondrial.